Reading from the N-terminus, the 243-residue chain is Leucinostatins biosynthesis cluster protein S (243 aa).

Part of the gene cluster that mediates the biosynthesis of the lipopeptide antibiotics leucinostatins that show extensive biological activities, including antimalarial, antiviral, antibacterial, antifungal, and antitumor activities, as well as phytotoxic. The function of lcsS within the leucinostatins biosynthesis has not been identified yet. This chain is Leucinostatins biosynthesis cluster protein S, found in Purpureocillium lilacinum (Paecilomyces lilacinus).